Here is a 500-residue protein sequence, read N- to C-terminus: Glycerol kinase (500 aa).

T12 provides a ligand contact to ADP. Positions 12, 13, and 14 each coordinate ATP. T12 serves as a coordination point for sn-glycerol 3-phosphate. Position 16 (R16) interacts with ADP. 4 residues coordinate sn-glycerol 3-phosphate: R82, E83, Y134, and D244. 5 residues coordinate glycerol: R82, E83, Y134, D244, and Q245. 2 residues coordinate ADP: T266 and G309. ATP contacts are provided by T266, G309, Q313, and G410. ADP-binding residues include G410 and N414.

Belongs to the FGGY kinase family. In terms of assembly, homotetramer and homodimer (in equilibrium).

It catalyses the reaction glycerol + ATP = sn-glycerol 3-phosphate + ADP + H(+). It participates in polyol metabolism; glycerol degradation via glycerol kinase pathway; sn-glycerol 3-phosphate from glycerol: step 1/1. Activated by phosphorylation and inhibited by fructose 1,6-bisphosphate (FBP). Functionally, key enzyme in the regulation of glycerol uptake and metabolism. Catalyzes the phosphorylation of glycerol to yield sn-glycerol 3-phosphate. The chain is Glycerol kinase from Alkaliphilus metalliredigens (strain QYMF).